We begin with the raw amino-acid sequence, 377 residues long: MSNGIVIIGSGFAARQLVKNIRKQDATIPLTLIAADSMDEYNKPDLSHVISQGQRADDLTRQTAGEFAEQFNLRLFPHTWVTDIDAEARVVKSQNNQWQYGKLVLATGASAFVPPVPGRELMLTLNSQQEYRACETQLRDARRVLIVGGGLIGSELAMDFCRAGKAVTLIDNAASILASLMPPEVSSRLQHRLTEMGVHLLLKSQLQGLEKTDSGILATLDRQRSIEVDAVIAATGLRPETALARRAGLTINRGVCVDSYLQTSNDDIYALGDCAEINGQVLPFLQPIQLSAMVLAKNLLGNNTPLKLPAMLVKIKTPELPLHLAGETQRQDLRWQINTERQGMVARGVDDADQLRAFVVSEDRMKEAFGLLKTLPM.

This sequence belongs to the FAD-dependent oxidoreductase family. FAD serves as cofactor.

It localises to the cytoplasm. The enzyme catalyses 2 reduced [nitric oxide reductase rubredoxin domain] + NAD(+) + H(+) = 2 oxidized [nitric oxide reductase rubredoxin domain] + NADH. Its pathway is nitrogen metabolism; nitric oxide reduction. One of at least two accessory proteins for anaerobic nitric oxide (NO) reductase. Reduces the rubredoxin moiety of NO reductase. This chain is Nitric oxide reductase FlRd-NAD(+) reductase, found in Escherichia coli O139:H28 (strain E24377A / ETEC).